A 322-amino-acid polypeptide reads, in one-letter code: tRNA U34 carboxymethyltransferase (322 aa).

Residues Lys90, Trp104, Lys109, Gly129, 151–153 (DPT), 179–180 (ME), Met195, Tyr199, and Arg314 each bind carboxy-S-adenosyl-L-methionine.

The protein belongs to the class I-like SAM-binding methyltransferase superfamily. CmoB family. In terms of assembly, homotetramer.

It catalyses the reaction carboxy-S-adenosyl-L-methionine + 5-hydroxyuridine(34) in tRNA = 5-carboxymethoxyuridine(34) in tRNA + S-adenosyl-L-homocysteine + H(+). In terms of biological role, catalyzes carboxymethyl transfer from carboxy-S-adenosyl-L-methionine (Cx-SAM) to 5-hydroxyuridine (ho5U) to form 5-carboxymethoxyuridine (cmo5U) at position 34 in tRNAs. This chain is tRNA U34 carboxymethyltransferase, found in Alcanivorax borkumensis (strain ATCC 700651 / DSM 11573 / NCIMB 13689 / SK2).